Reading from the N-terminus, the 398-residue chain is tRNA-specific 2-thiouridylase MnmA (398 aa).

Residues 18 to 25 (AMSGGVDS) and L44 each bind ATP. C112 serves as the catalytic Nucleophile. Residues C112 and C213 are joined by a disulfide bond. G136 is a binding site for ATP. Residues 163–165 (RDQ) are interaction with tRNA. C213 serves as the catalytic Cysteine persulfide intermediate.

Belongs to the MnmA/TRMU family.

It is found in the cytoplasm. The catalysed reaction is S-sulfanyl-L-cysteinyl-[protein] + uridine(34) in tRNA + AH2 + ATP = 2-thiouridine(34) in tRNA + L-cysteinyl-[protein] + A + AMP + diphosphate + H(+). Functionally, catalyzes the 2-thiolation of uridine at the wobble position (U34) of tRNA, leading to the formation of s(2)U34. The protein is tRNA-specific 2-thiouridylase MnmA of Rhizobium meliloti (strain 1021) (Ensifer meliloti).